Here is a 444-residue protein sequence, read N- to C-terminus: Signal recognition particle 54 kDa protein (444 aa).

Residues 102-109, 184-188, and 244-247 each bind GTP; these read GVQGSGKT, DTAGR, and SKMD.

Belongs to the GTP-binding SRP family. SRP54 subfamily. Part of the signal recognition particle protein translocation system, which is composed of SRP and FtsY. Archaeal SRP consists of a 7S RNA molecule of 300 nucleotides and two protein subunits: SRP54 and SRP19.

Its subcellular location is the cytoplasm. The enzyme catalyses GTP + H2O = GDP + phosphate + H(+). Its function is as follows. Involved in targeting and insertion of nascent membrane proteins into the cytoplasmic membrane. Binds to the hydrophobic signal sequence of the ribosome-nascent chain (RNC) as it emerges from the ribosomes. The SRP-RNC complex is then targeted to the cytoplasmic membrane where it interacts with the SRP receptor FtsY. This chain is Signal recognition particle 54 kDa protein, found in Sulfolobus acidocaldarius (strain ATCC 33909 / DSM 639 / JCM 8929 / NBRC 15157 / NCIMB 11770).